We begin with the raw amino-acid sequence, 143 residues long: Hemoglobin subunit alpha-2 (143 aa).

Ser-2 carries the N-acetylserine modification. The region spanning Ser-2–Arg-143 is the Globin domain. Position 60 (His-60) interacts with O2. His-89 is a heme b binding site.

The protein belongs to the globin family. In terms of assembly, hb 2 is a heterotetramer of two alpha-2 and two beta-2 chains. In terms of tissue distribution, red blood cells.

Its function is as follows. Involved in oxygen transport from gills to the various peripheral tissues. The sequence is that of Hemoglobin subunit alpha-2 (hba2) from Gadus morhua (Atlantic cod).